The following is a 240-amino-acid chain: Inhibitor of growth protein 5 (240 aa).

At lysine 114 the chain carries N6-acetyllysine. Residues 116 to 165 (EGSDFESSGGRGLKKGRGQKEKRGSRGRGRRTSEEDTPKKKKHKGGSEFT) are disordered. Serine 118 is subject to Phosphoserine. Arginine 126 carries the omega-N-methylarginine modification. The segment at 186-235 (PTYCLCHQVSYGEMIGCDNPDCPIEWFHFACVDLTTKPKGKWFCPRCVQE) adopts a PHD-type zinc-finger fold. Zn(2+) contacts are provided by cysteine 189, cysteine 191, cysteine 202, cysteine 207, histidine 213, cysteine 216, cysteine 229, and cysteine 232.

The protein belongs to the ING family. Component of the HBO1 complex composed of KAT7/HBO1, MEAF6, ING5, and one scaffold subunit: complexes containing BRPF scaffold (BRPF1, BRD1/BRPF2 or BRPF3) direct KAT7/HBO1 specificity towards H3K14ac, while complexes containing JADE scaffold (JADE1, JADE2 and JADE3) mediate acetylation of histone H4. Component of the MOZ/MORF complex composed at least of ING5, KAT6A, KAT6B, MEAF6 and one of BRPF1, BRD1/BRPF2 and BRPF3. Interacts with H3K4me3 and to a lesser extent with H3K4me2. Interacts with EP300 and p53/TP53. Interacts with INCA1. In terms of tissue distribution, down-regulated in bone marrow cells in acute myeloid leukemia patients as compared with normal bone marrow cells.

The protein resides in the nucleus. It is found in the chromosome. Functionally, component of the HBO1 complex, which specifically mediates acetylation of histone H3 at 'Lys-14' (H3K14ac) and, to a lower extent, acetylation of histone H4. Component of the MOZ/MORF complex which has a histone H3 acetyltransferase activity. Through chromatin acetylation it may regulate DNA replication and may function as a transcriptional coactivator. Inhibits cell growth, induces a delay in S-phase progression and enhances Fas-induced apoptosis in an INCA1-dependent manner. The sequence is that of Inhibitor of growth protein 5 (ING5) from Homo sapiens (Human).